The primary structure comprises 305 residues: Acetaldehyde dehydrogenase (305 aa).

12 to 15 (SGNI) is a binding site for NAD(+). The active-site Acyl-thioester intermediate is Cys127. Residues 158–166 (SAGPGTRAN) and Asn277 each bind NAD(+).

It belongs to the acetaldehyde dehydrogenase family.

The catalysed reaction is acetaldehyde + NAD(+) + CoA = acetyl-CoA + NADH + H(+). The chain is Acetaldehyde dehydrogenase from Mycolicibacterium paratuberculosis (strain ATCC BAA-968 / K-10) (Mycobacterium paratuberculosis).